A 229-amino-acid polypeptide reads, in one-letter code: 2-C-methyl-D-erythritol 4-phosphate cytidylyltransferase (229 aa).

The protein belongs to the IspD/TarI cytidylyltransferase family. IspD subfamily.

It carries out the reaction 2-C-methyl-D-erythritol 4-phosphate + CTP + H(+) = 4-CDP-2-C-methyl-D-erythritol + diphosphate. It participates in isoprenoid biosynthesis; isopentenyl diphosphate biosynthesis via DXP pathway; isopentenyl diphosphate from 1-deoxy-D-xylulose 5-phosphate: step 2/6. Functionally, catalyzes the formation of 4-diphosphocytidyl-2-C-methyl-D-erythritol from CTP and 2-C-methyl-D-erythritol 4-phosphate (MEP). The polypeptide is 2-C-methyl-D-erythritol 4-phosphate cytidylyltransferase (Clostridium acetobutylicum (strain ATCC 824 / DSM 792 / JCM 1419 / IAM 19013 / LMG 5710 / NBRC 13948 / NRRL B-527 / VKM B-1787 / 2291 / W)).